The primary structure comprises 332 residues: Melanocortin receptor 4 (332 aa).

Residues 1–43 (MVNSTHRGMHASLHLWNRSSHRLHSNASESLGKGYSDGGCYEQ) are Extracellular-facing. 3 N-linked (GlcNAc...) asparagine glycosylation sites follow: Asn-3, Asn-17, and Asn-26. Disulfide bonds link Cys-40-Cys-279 and Cys-271-Cys-277. Residues 44 to 69 (LFVSPEVFVTLGVISLLENILVIVAI) form a helical membrane-spanning segment. At 70–81 (AKNKNLHSPMYF) the chain is on the cytoplasmic side. A helical membrane pass occupies residues 82–106 (FICSLAVADMLVSVSNGSETIVITL). Ca(2+)-binding residues include Glu-100, Asp-122, and Asp-126. Topologically, residues 107-123 (LNSTDTDTQSFTVNIDN) are extracellular. A helical transmembrane segment spans residues 124–145 (VIDSVICSSLLASICSLLSIAV). Residues 146–165 (DRYFTIFYALQYHNIMTVKR) lie on the Cytoplasmic side of the membrane. The chain crosses the membrane as a helical span at residues 166-186 (VRIIISCIWAACTVSGILFII). Residues 187–191 (YSDSS) lie on the Extracellular side of the membrane. A helical membrane pass occupies residues 192–215 (AVIICLITMFFTMLALMASLYVHM). Over 216 to 248 (FLMARLHIKRIAVLPGTGAIRQGANMKGAITLT) the chain is Cytoplasmic. Residues 249-271 (ILIGVFVVCWAPFFLHLIFYISC) form a helical membrane-spanning segment. The Extracellular segment spans residues 272–280 (PQNPYCVCF). The chain crosses the membrane as a helical span at residues 281–304 (MSHFNLYLILIMCNSVIDPLIYAL). At 305–332 (RSQELRKTFKEIICCYPLGGLCDLSSRY) the chain is on the cytoplasmic side. A lipid anchor (S-palmitoyl cysteine) is attached at Cys-318.

Belongs to the G-protein coupled receptor 1 family. In terms of assembly, homodimer; disulfide-linked, also forms higher order oligomers. Interacts with GNAS. Interacts with ATRNL1. Interacts with MGRN1; this interaction competes with GNAS-binding and thus inhibits agonist-induced cAMP production. Interacts with MRAP and MRAP2; these associated factors increase ligand-sensitivity and generation of cAMP.

The protein localises to the cell membrane. In terms of biological role, hormone receptor that acts as a key component of the leptin-melanocortin pathway at the intersection of homeostatic maintenance of energetic state. Plays a role in regulating food intake: activation by a stimulating hormone such as anorexigenic alpha-melanocyte stimulating hormone (alpha-MSH) inhibits appetite, whereas binding to a natural antagonist like Agouti-related protein/AGRP promotes appetite. G-protein-coupled receptor that activates conventional Galphas signaling leading to induction of anorexogenic signaling in the hypothalamus to result in negative energy balance. Regulates the firing activity of neurons from the hypothalamus by alpha-MSH and AGRP independently of Galphas signaling by ligand-induced coupling of closure of inwardly rectifying potassium channel KCNJ13. In intestinal epithelial cells, plays a role in the inhibition of hepatic glucose production via nesfatin-1/NUCB2 leading to increased cyclic adenosine monophosphate (cAMP) levels and glucagon-like peptide 1 (GLP-1) secretion in the intestinal epithelium. This Macaca fascicularis (Crab-eating macaque) protein is Melanocortin receptor 4 (MC4R).